The sequence spans 466 residues: Lipase 2 (466 aa).

A signal peptide spans 1–16; it reads MKGLVFLLGLLPTIYA. A disulfide bond links Cys112 and Cys285. The active-site Charge relay system is the Ser196. N-linked (GlcNAc...) asparagine glycans are attached at residues Asn231, Asn319, and Asn331. Residues Asp348 and His381 each act as charge relay system in the active site. The cysteines at positions 364 and 409 are disulfide-linked. N-linked (GlcNAc...) asparagine glycans are attached at residues Asn422 and Asn451.

The protein belongs to the AB hydrolase superfamily. Lipase family. Class Lip subfamily.

It is found in the secreted. It catalyses the reaction a triacylglycerol + H2O = a diacylglycerol + a fatty acid + H(+). Its function is as follows. Secreted lipase that is able to hydrolyze both the neutral triacylglycerols and the monopalmitate ester Tween 40, allowing the use of hydrolyzed products as carbon sources. Has broad lipolytic activity, which may be important for colonization and subsequent infection, therefore contributing to the persistence and virulence in human tissue. My be important for alimentary tract colonization, but not oral infection. Facilitates invasive disease via lipid-based suppression of the IL-17 response. Inhibits IL-17 production indirectly by suppressing IL-23 production by tissue-resident dendritic cells. The sequence is that of Lipase 2 from Candida albicans (strain SC5314 / ATCC MYA-2876) (Yeast).